The following is a 238-amino-acid chain: Ribonuclease PH (238 aa).

Residues Arg86 and Gly124–Arg126 each bind phosphate.

The protein belongs to the RNase PH family. Homohexameric ring arranged as a trimer of dimers.

It catalyses the reaction tRNA(n+1) + phosphate = tRNA(n) + a ribonucleoside 5'-diphosphate. Its function is as follows. Phosphorolytic 3'-5' exoribonuclease that plays an important role in tRNA 3'-end maturation. Removes nucleotide residues following the 3'-CCA terminus of tRNAs; can also add nucleotides to the ends of RNA molecules by using nucleoside diphosphates as substrates, but this may not be physiologically important. Probably plays a role in initiation of 16S rRNA degradation (leading to ribosome degradation) during starvation. This is Ribonuclease PH from Hahella chejuensis (strain KCTC 2396).